A 142-amino-acid chain; its full sequence is Small ribosomal subunit protein bS6 (142 aa).

Residues 103–142 (KAAESREQRAPRGEDRPARVVADDVDDSDDDTDDEDSNDE) form a disordered region. Over residues 105–124 (AESREQRAPRGEDRPARVVA) the composition is skewed to basic and acidic residues. The span at 125 to 142 (DDVDDSDDDTDDEDSNDE) shows a compositional bias: acidic residues.

It belongs to the bacterial ribosomal protein bS6 family.

In terms of biological role, binds together with bS18 to 16S ribosomal RNA. This chain is Small ribosomal subunit protein bS6, found in Hahella chejuensis (strain KCTC 2396).